The primary structure comprises 307 residues: Branched-chain-amino-acid aminotransferase (307 aa).

At Lys160 the chain carries N6-(pyridoxal phosphate)lysine.

It belongs to the class-IV pyridoxal-phosphate-dependent aminotransferase family. Pyridoxal 5'-phosphate is required as a cofactor.

The catalysed reaction is L-leucine + 2-oxoglutarate = 4-methyl-2-oxopentanoate + L-glutamate. It catalyses the reaction L-isoleucine + 2-oxoglutarate = (S)-3-methyl-2-oxopentanoate + L-glutamate. It carries out the reaction L-valine + 2-oxoglutarate = 3-methyl-2-oxobutanoate + L-glutamate. Its pathway is amino-acid biosynthesis; L-isoleucine biosynthesis; L-isoleucine from 2-oxobutanoate: step 4/4. It participates in amino-acid biosynthesis; L-leucine biosynthesis; L-leucine from 3-methyl-2-oxobutanoate: step 4/4. The protein operates within amino-acid biosynthesis; L-valine biosynthesis; L-valine from pyruvate: step 4/4. Acts on leucine, isoleucine and valine. The protein is Branched-chain-amino-acid aminotransferase (ilvE) of Pseudomonas aeruginosa (strain ATCC 15692 / DSM 22644 / CIP 104116 / JCM 14847 / LMG 12228 / 1C / PRS 101 / PAO1).